Consider the following 610-residue polypeptide: tRNA uridine 5-carboxymethylaminomethyl modification enzyme MnmG (610 aa).

14–19 serves as a coordination point for FAD; it reads GAGHAG. 274–288 is a binding site for NAD(+); sequence GPRYCPSIEDKIVKF.

This sequence belongs to the MnmG family. Homodimer. Heterotetramer of two MnmE and two MnmG subunits. The cofactor is FAD.

The protein localises to the cytoplasm. Functionally, NAD-binding protein involved in the addition of a carboxymethylaminomethyl (cmnm) group at the wobble position (U34) of certain tRNAs, forming tRNA-cmnm(5)s(2)U34. The protein is tRNA uridine 5-carboxymethylaminomethyl modification enzyme MnmG of Chlamydia trachomatis serovar L2b (strain UCH-1/proctitis).